A 239-amino-acid chain; its full sequence is Small ribosomal subunit protein uS3c (239 aa).

The KH type-2 domain maps to 43 to 139; the sequence is IKNYIQKNRK…RLNISIEKVK (97 aa). Positions 50-80 are disordered; sequence NRKKSSNRKLESDSSSEVITHNRKNDSGSSS.

Belongs to the universal ribosomal protein uS3 family. As to quaternary structure, part of the 30S ribosomal subunit.

Its subcellular location is the plastid. It is found in the chloroplast. In Lolium perenne (Perennial ryegrass), this protein is Small ribosomal subunit protein uS3c (rps3).